We begin with the raw amino-acid sequence, 91 residues long: Antifungal protein opdH (91 aa).

The signal sequence occupies residues 1–18; it reads MQFSSLSLVFLAVIGAIA. Positions 19-33 are excised as a propeptide; that stretch reads NPIAVDSELENRDVQ. 3 cysteine pairs are disulfide-bonded: Cys-41-Cys-69, Cys-48-Cys-76, and Cys-61-Cys-87.

The protein belongs to the antifungal protein pafB family.

It is found in the secreted. The protein localises to the host cytoplasm. Functionally, antifungal protein; part of the gene cluster that mediates the biosynthesis of oxopyrrolidines, polyketide-amino acid hybrid compounds with feature structures of tetramic acid. Acts as an inhibitor of growth of various molds and yeasts. The polypeptide is Antifungal protein opdH (Penicillium oxalicum (strain 114-2 / CGMCC 5302) (Penicillium decumbens)).